Consider the following 304-residue polypeptide: MRYLEIRIRCQRAAADAVGNLLLTLTGAGYAVDDPLIVEQNRSRWDMTDLPPGDPEWVTVSGWLPEAGDVEQQRLRLETGLDEIRSLGLGAVDPARFRWVEEEDWAHAWKAYFRPTRVGDRLVVVPAWEEYAPQEGELPIRIDPGMAFGTGTHATTALCMRWLEELVTPGSRVIDVGTGSGILAVAAKHLGAAEVVAIDVDPVAVDAARENAGRNGVEIDVRLATLDQVAEGEADLIVANIIASVIVDILPDVASRLKPGGRFLASGIIAARKEAVTEAMTDAWLLPVGAREQDGWVAILAMKP.

Threonine 156, glycine 177, aspartate 199, and asparagine 240 together coordinate S-adenosyl-L-methionine.

The protein belongs to the methyltransferase superfamily. PrmA family.

It localises to the cytoplasm. It carries out the reaction L-lysyl-[protein] + 3 S-adenosyl-L-methionine = N(6),N(6),N(6)-trimethyl-L-lysyl-[protein] + 3 S-adenosyl-L-homocysteine + 3 H(+). Its function is as follows. Methylates ribosomal protein L11. In Symbiobacterium thermophilum (strain DSM 24528 / JCM 14929 / IAM 14863 / T), this protein is Ribosomal protein L11 methyltransferase.